A 367-amino-acid polypeptide reads, in one-letter code: MSLSEQVLAVNDDLPIRTDKPVHSGKVRSVYWLTEEDSRRLIKEKGYNVAPDAPLAIMVISDRISAFDCIWHGEGGLKGIPGKGAALNAISNHWFQLFKDNNLADSHILDIPHPFVWIVQKAKPVMIEAICRQYITGSMWRAYTNGEREFCGIQIPERLEKDEELADLLLTPSTKGVLKGIEGVSEVDDVNITRKDIENNFSAFNFSSIEDIALYEKLLKEGFAVISKALNDIDQIFVDTKFEFGYVNDAQGNEKLIYMDEVGTPDSSRIWDKNAYRSGHIIENSKEGFRQFLLNHFPEPDILLNKNRMDERFALATENSLPLEAMMDLSKTYLDIAAKITGAPIMLSDNPKAEIIKVLKEQYQLVD.

Belongs to the SAICAR synthetase family.

The enzyme catalyses 5-amino-1-(5-phospho-D-ribosyl)imidazole-4-carboxylate + L-aspartate + ATP = (2S)-2-[5-amino-1-(5-phospho-beta-D-ribosyl)imidazole-4-carboxamido]succinate + ADP + phosphate + 2 H(+). Its pathway is purine metabolism; IMP biosynthesis via de novo pathway; 5-amino-1-(5-phospho-D-ribosyl)imidazole-4-carboxamide from 5-amino-1-(5-phospho-D-ribosyl)imidazole-4-carboxylate: step 1/2. This is Phosphoribosylaminoimidazole-succinocarboxamide synthase from Aliivibrio salmonicida (strain LFI1238) (Vibrio salmonicida (strain LFI1238)).